The chain runs to 342 residues: MAYSTDHDVVLDFPILIGDIGGTNARFAIVVDSYAEPREFPVVQTADFATIEDAIQTAILDQTHLIPRSAVLAVAGPVNGDEIDLTNSNWVVRPREMMAHLGFSDIVVLNDFEAQALAVVALGEEHLEKIGGNVAETVGSRVVLGPGTGLGVAGLVHARRTWIPVPGEGGHMDLGPRTARDEQIFPHLERIEGRVSGEQVLCGRGLVNLYRAIAKADAKEAAFSSPAEITTAGLAQADEIAVETLNLFVTYLGRVAGDLGLVFMSRGGVFLTGGIAQKIVPALKNSLFRAAFEDKAPHNELMASMPVYVITHPLAALHGLAAYARTPARFGVETAGRRWRLR.

Residue 18-23 (GDIGGT) participates in ATP binding.

The protein belongs to the bacterial glucokinase family.

It localises to the cytoplasm. It catalyses the reaction D-glucose + ATP = D-glucose 6-phosphate + ADP + H(+). The chain is Glucokinase from Chelativorans sp. (strain BNC1).